A 424-amino-acid polypeptide reads, in one-letter code: Glutamyl-tRNA reductase (424 aa).

Residues 51–54 (TCNR), S99, 104–106 (EDQ), and Q110 contribute to the substrate site. C52 functions as the Nucleophile in the catalytic mechanism. 179–184 (GTGEMG) is an NADP(+) binding site.

The protein belongs to the glutamyl-tRNA reductase family. In terms of assembly, homodimer.

The enzyme catalyses (S)-4-amino-5-oxopentanoate + tRNA(Glu) + NADP(+) = L-glutamyl-tRNA(Glu) + NADPH + H(+). It participates in porphyrin-containing compound metabolism; protoporphyrin-IX biosynthesis; 5-aminolevulinate from L-glutamyl-tRNA(Glu): step 1/2. Catalyzes the NADPH-dependent reduction of glutamyl-tRNA(Glu) to glutamate 1-semialdehyde (GSA). The polypeptide is Glutamyl-tRNA reductase (Methanospirillum hungatei JF-1 (strain ATCC 27890 / DSM 864 / NBRC 100397 / JF-1)).